The chain runs to 93 residues: Pyrimidine/purine nucleoside phosphorylase (93 aa).

Belongs to the nucleoside phosphorylase PpnP family.

The enzyme catalyses a purine D-ribonucleoside + phosphate = a purine nucleobase + alpha-D-ribose 1-phosphate. It carries out the reaction adenosine + phosphate = alpha-D-ribose 1-phosphate + adenine. The catalysed reaction is cytidine + phosphate = cytosine + alpha-D-ribose 1-phosphate. It catalyses the reaction guanosine + phosphate = alpha-D-ribose 1-phosphate + guanine. The enzyme catalyses inosine + phosphate = alpha-D-ribose 1-phosphate + hypoxanthine. It carries out the reaction thymidine + phosphate = 2-deoxy-alpha-D-ribose 1-phosphate + thymine. The catalysed reaction is uridine + phosphate = alpha-D-ribose 1-phosphate + uracil. It catalyses the reaction xanthosine + phosphate = alpha-D-ribose 1-phosphate + xanthine. Functionally, catalyzes the phosphorolysis of diverse nucleosides, yielding D-ribose 1-phosphate and the respective free bases. Can use uridine, adenosine, guanosine, cytidine, thymidine, inosine and xanthosine as substrates. Also catalyzes the reverse reactions. The sequence is that of Pyrimidine/purine nucleoside phosphorylase from Pseudomonas aeruginosa (strain LESB58).